The chain runs to 146 residues: Snake venom vascular endothelial growth factor toxin (146 aa).

The first 24 residues, 1–24 (MAVYLLAVAILFCIQGWPLGTVQG), serve as a signal peptide directing secretion. Gln25 carries the post-translational modification Pyrrolidone carboxylic acid. 3 cysteine pairs are disulfide-bonded: Cys38–Cys80, Cys69–Cys115, and Cys73–Cys117. The disordered stretch occupies residues 118 to 146 (RPRSASGVNSRKHKRNPEEGEPRAKFPFV). Over residues 133 to 146 (NPEEGEPRAKFPFV) the composition is skewed to basic and acidic residues.

Belongs to the PDGF/VEGF growth factor family. Snake venom VEGF subfamily. Homodimer; disulfide-linked. Interacts with VEGF receptor-1 (FLT1) with a high affinity, whereas it binds to VEGF receptor-2 (KDR) with a low affinity. Does not bind VEGF receptor-3 (FLT4). As to expression, expressed by the venom gland.

The protein localises to the secreted. Snake venom VEGFs that may contribute to venom dispersion and prey subjugation by inducing vascular permeability and hypotension. This protein induces an increase in capillary permeability after intradermal injection, as well as a drastic hypotensive effect after intravenous injection. The hypotension is mediated by nitric oxide (NO), which is produced by VEGF-activated endothelium NO synthase. Also induces angiogenesis in vitro. Like other crotalid VEGFs, this protein interacts with VEGF receptor-1 (FLT1) with a high affinity, whereas it binds to VEGF receptor-2 (KDR) with a low affinity. This is Snake venom vascular endothelial growth factor toxin from Bothrops jararaca (Jararaca).